A 455-amino-acid polypeptide reads, in one-letter code: Bifunctional protein GlmU (455 aa).

The tract at residues 1–232 is pyrophosphorylase; it reads MASTTGALIL…DPNLLGVNNP (232 aa). Residues 10-13, Lys24, Gln75, and 80-81 contribute to the UDP-N-acetyl-alpha-D-glucosamine site; these read LAAG and GT. A Mg(2+)-binding site is contributed by Asp106. Residues Gly141, Glu155, Asn172, and Asn230 each coordinate UDP-N-acetyl-alpha-D-glucosamine. Asn230 contributes to the Mg(2+) binding site. A linker region spans residues 233–253; that stretch reads AELIRSEALLRTRLVIGHIEG. Residues 254–455 are N-acetyltransferase; the sequence is GVLIHAPETV…QTNLPRKPKA (202 aa). UDP-N-acetyl-alpha-D-glucosamine is bound by residues Arg336 and Lys354. The active-site Proton acceptor is His366. The UDP-N-acetyl-alpha-D-glucosamine site is built by Tyr369 and Asn380. Acetyl-CoA-binding positions include Ala383, 389 to 390, Ser408, Ala426, and Arg443; that span reads NY.

It in the N-terminal section; belongs to the N-acetylglucosamine-1-phosphate uridyltransferase family. This sequence in the C-terminal section; belongs to the transferase hexapeptide repeat family. In terms of assembly, homotrimer. Mg(2+) serves as cofactor.

Its subcellular location is the cytoplasm. It carries out the reaction alpha-D-glucosamine 1-phosphate + acetyl-CoA = N-acetyl-alpha-D-glucosamine 1-phosphate + CoA + H(+). It catalyses the reaction N-acetyl-alpha-D-glucosamine 1-phosphate + UTP + H(+) = UDP-N-acetyl-alpha-D-glucosamine + diphosphate. It participates in nucleotide-sugar biosynthesis; UDP-N-acetyl-alpha-D-glucosamine biosynthesis; N-acetyl-alpha-D-glucosamine 1-phosphate from alpha-D-glucosamine 6-phosphate (route II): step 2/2. Its pathway is nucleotide-sugar biosynthesis; UDP-N-acetyl-alpha-D-glucosamine biosynthesis; UDP-N-acetyl-alpha-D-glucosamine from N-acetyl-alpha-D-glucosamine 1-phosphate: step 1/1. The protein operates within bacterial outer membrane biogenesis; LPS lipid A biosynthesis. Functionally, catalyzes the last two sequential reactions in the de novo biosynthetic pathway for UDP-N-acetylglucosamine (UDP-GlcNAc). The C-terminal domain catalyzes the transfer of acetyl group from acetyl coenzyme A to glucosamine-1-phosphate (GlcN-1-P) to produce N-acetylglucosamine-1-phosphate (GlcNAc-1-P), which is converted into UDP-GlcNAc by the transfer of uridine 5-monophosphate (from uridine 5-triphosphate), a reaction catalyzed by the N-terminal domain. In Nitratidesulfovibrio vulgaris (strain ATCC 29579 / DSM 644 / CCUG 34227 / NCIMB 8303 / VKM B-1760 / Hildenborough) (Desulfovibrio vulgaris), this protein is Bifunctional protein GlmU.